The sequence spans 503 residues: Transcription termination/antitermination protein NusA (503 aa).

One can recognise an S1 motif domain in the interval 139–203 (GDIINGIVKR…KGPQIFLSRV (65 aa)). The region spanning 308–378 (SHKVEVVVSQ…LDVEEVIGQL (71 aa)) is the KH domain.

It belongs to the NusA family. Monomer. Binds directly to the core enzyme of the DNA-dependent RNA polymerase and to nascent RNA.

It localises to the cytoplasm. In terms of biological role, participates in both transcription termination and antitermination. The polypeptide is Transcription termination/antitermination protein NusA (Rickettsia prowazekii (strain Madrid E)).